The following is a 129-amino-acid chain: NADPH-dependent 7-cyano-7-deazaguanine reductase (129 aa).

C34 functions as the Thioimide intermediate in the catalytic mechanism. D41 serves as the catalytic Proton donor. Substrate is bound by residues 56–58 and 75–76; these read VEL and HE.

The protein belongs to the GTP cyclohydrolase I family. QueF type 1 subfamily.

The protein resides in the cytoplasm. The catalysed reaction is 7-aminomethyl-7-carbaguanine + 2 NADP(+) = 7-cyano-7-deazaguanine + 2 NADPH + 3 H(+). It functions in the pathway tRNA modification; tRNA-queuosine biosynthesis. In terms of biological role, catalyzes the NADPH-dependent reduction of 7-cyano-7-deazaguanine (preQ0) to 7-aminomethyl-7-deazaguanine (preQ1). The chain is NADPH-dependent 7-cyano-7-deazaguanine reductase from Nitrosococcus oceani (strain ATCC 19707 / BCRC 17464 / JCM 30415 / NCIMB 11848 / C-107).